The primary structure comprises 438 residues: Transcriptional enhancer factor TEF-3 (438 aa).

Residues 1–18 (MTSEWSSPASPEGSNDSG) show a composition bias toward polar residues. Disordered stretches follow at residues 1–36 (MTSE…GVWS) and 195–217 (QPSL…STPA). A DNA-binding region (TEA) is located at residues 28-104 (DNDAEGVWSP…QVLARRKARE (77 aa)). Residues 205 to 216 (SPTGLPPSSSTP) show a composition bias toward low complexity.

In terms of tissue distribution, enriched in cardiac and skeletal muscle.

It is found in the nucleus. Its function is as follows. Transcription factor which plays a key role in the Hippo signaling pathway, a pathway involved in organ size control and tumor suppression by restricting proliferation and promoting apoptosis. The core of this pathway is composed of a kinase cascade wherein MST1/MST2, in complex with its regulatory protein SAV1, phosphorylates and activates LATS1/2 in complex with its regulatory protein MOB1, which in turn phosphorylates and inactivates YAP1 oncoprotein and WWTR1/TAZ. Binds m-cat elements from muscle-specific promoters and differentially activate transcription. In terms of biological role, isoform B has probably a transactivation capacity that is lacking in the other isoforms. Isoform D may be defective in DNA binding. This Gallus gallus (Chicken) protein is Transcriptional enhancer factor TEF-3 (TEAD4).